We begin with the raw amino-acid sequence, 176 residues long: Protein GrpE (176 aa).

The protein belongs to the GrpE family. In terms of assembly, homodimer.

The protein resides in the cytoplasm. Its function is as follows. Participates actively in the response to hyperosmotic and heat shock by preventing the aggregation of stress-denatured proteins, in association with DnaK and GrpE. It is the nucleotide exchange factor for DnaK and may function as a thermosensor. Unfolded proteins bind initially to DnaJ; upon interaction with the DnaJ-bound protein, DnaK hydrolyzes its bound ATP, resulting in the formation of a stable complex. GrpE releases ADP from DnaK; ATP binding to DnaK triggers the release of the substrate protein, thus completing the reaction cycle. Several rounds of ATP-dependent interactions between DnaJ, DnaK and GrpE are required for fully efficient folding. The protein is Protein GrpE of Thermoplasma volcanium (strain ATCC 51530 / DSM 4299 / JCM 9571 / NBRC 15438 / GSS1).